The chain runs to 289 residues: Zinc finger matrin-type protein 3 (289 aa).

2 Matrin-type zinc fingers span residues leucine 70–asparagine 100 and aspartate 147–leucine 177. Disordered stretches follow at residues alanine 180–glutamate 202 and glutamate 265–glutamine 289. The Matrin-type 3 zinc-finger motif lies at phenylalanine 245–glutamate 275. Residues glutamate 265 to methionine 282 show a composition bias toward basic and acidic residues.

In terms of assembly, interacts with dsRNA. Highly expressed in brain, gut, lung, and testis.

It is found in the nucleus. The protein localises to the nucleolus. Its function is as follows. Acts as a bona fide target gene of p53/TP53. May play a role in the TP53-dependent growth regulatory pathway. May contribute to TP53-mediated apoptosis by regulation of TP53 expression and translocation to the nucleus and nucleolus. This Rattus norvegicus (Rat) protein is Zinc finger matrin-type protein 3.